A 347-amino-acid chain; its full sequence is Probable RNA methyltransferase Lcho_2507 (347 aa).

Glu89 functions as the Proton acceptor in the catalytic mechanism. Residues 92–318 (LLPRDGLCVS…TKLRQSAGQD (227 aa)) form the Radical SAM core domain. Cys99 and Cys323 form a disulfide bridge. Residues Cys106, Cys110, and Cys113 each coordinate [4Fe-4S] cluster. S-adenosyl-L-methionine-binding positions include 151 to 152 (GE), Ser181, 204 to 206 (SLH), and Asn280. The S-methylcysteine intermediate role is filled by Cys323.

It belongs to the radical SAM superfamily. RlmN family. It depends on [4Fe-4S] cluster as a cofactor.

It localises to the cytoplasm. The protein is Probable RNA methyltransferase Lcho_2507 of Leptothrix cholodnii (strain ATCC 51168 / LMG 8142 / SP-6) (Leptothrix discophora (strain SP-6)).